A 489-amino-acid chain; its full sequence is L-asparagine permease (489 aa).

The next 12 membrane-spanning stretches (helical) occupy residues 38-58, 62-82, 113-133, 150-170, 175-195, 223-243, 268-288, 302-322, 357-377, 382-402, 426-446, and 452-472; these read HVNM…GAGG, DAGP…FFVV, VAGW…ITAI, VLAL…VKIF, FWFA…GIFL, VMPV…LELV, VALF…SSLY, IGVP…AMSS, YGGI…NYLV, FEIV…IIMI, SPVT…LMWN, and RKTV…WFGV.

The protein belongs to the amino acid-polyamine-organocation (APC) superfamily. Amino acid transporter (AAT) (TC 2.A.3.1) family.

The protein resides in the cell membrane. The polypeptide is L-asparagine permease (ansP) (Streptomyces coelicolor (strain ATCC BAA-471 / A3(2) / M145)).